The chain runs to 253 residues: MALQSESTGPVSPSVDPAEIAKFSRLSAEWWDPTGKMAPLHRINPLRISFIRDAACRKFERNAKSLSCLSGLRMLDIGCGAGLLCEPFTRLGAQVIGIDPSATNIAAAKLHADKSHLAIDYRCTTVEEIDPRERFDIVMAMEVIEHVNDVPAFLGRCAALMKPTGIMLVATLNRNWKSFALAIVGAEYVMRWLPRGTHQWDKFVTPDELEQHLQGLGLVVTEQSGLVFNPLADRWRLSPDMDVNYMVVAETAP.

Positions 47, 78, 99, and 141 each coordinate S-adenosyl-L-methionine.

This sequence belongs to the methyltransferase superfamily. UbiG/COQ3 family.

The catalysed reaction is a 3-demethylubiquinol + S-adenosyl-L-methionine = a ubiquinol + S-adenosyl-L-homocysteine + H(+). It catalyses the reaction a 3-(all-trans-polyprenyl)benzene-1,2-diol + S-adenosyl-L-methionine = a 2-methoxy-6-(all-trans-polyprenyl)phenol + S-adenosyl-L-homocysteine + H(+). It participates in cofactor biosynthesis; ubiquinone biosynthesis. In terms of biological role, O-methyltransferase that catalyzes the 2 O-methylation steps in the ubiquinone biosynthetic pathway. The protein is Ubiquinone biosynthesis O-methyltransferase of Rhodopseudomonas palustris (strain BisB5).